The primary structure comprises 35 residues: Photosystem II reaction center protein T (35 aa).

Residues 3-23 form a helical membrane-spanning segment; sequence ALVYTFLLISTLGIIFFAIFF.

It belongs to the PsbT family. In terms of assembly, PSII is composed of 1 copy each of membrane proteins PsbA, PsbB, PsbC, PsbD, PsbE, PsbF, PsbH, PsbI, PsbJ, PsbK, PsbL, PsbM, PsbT, PsbY, PsbZ, Psb30/Ycf12, at least 3 peripheral proteins of the oxygen-evolving complex and a large number of cofactors. It forms dimeric complexes.

The protein resides in the plastid. It is found in the chloroplast thylakoid membrane. In terms of biological role, found at the monomer-monomer interface of the photosystem II (PS II) dimer, plays a role in assembly and dimerization of PSII. PSII is a light-driven water plastoquinone oxidoreductase, using light energy to abstract electrons from H(2)O, generating a proton gradient subsequently used for ATP formation. The polypeptide is Photosystem II reaction center protein T (Aristolochia macrophylla (Dutchman's pipe vine)).